Consider the following 554-residue polypeptide: GPI transamidase component PIG-S homolog (554 aa).

The Cytoplasmic portion of the chain corresponds to 1 to 73 (MSPCKWLTMF…LNKPEKSLKR (73 aa)). Residues 74 to 94 (YALLSFYVIILLAIPVWWKTT) form a helical membrane-spanning segment. The Lumenal portion of the chain corresponds to 95 to 511 (HYERSSLPFE…VTTIYFPDES (417 aa)). 2 N-linked (GlcNAc...) asparagine glycosylation sites follow: Asn132 and Asn375. Residues 512–532 (KYGIYAPLFAPILIPLLISFI) form a helical membrane-spanning segment. Topologically, residues 533–554 (KEVKDMLRERKLHRVANVPKPN) are cytoplasmic.

The protein belongs to the PIGS family. Forms a complex with PIG-T homolog, PIG-U homolog and GPI8.

Its subcellular location is the endoplasmic reticulum membrane. Its pathway is glycolipid biosynthesis; glycosylphosphatidylinositol-anchor biosynthesis. Functionally, component of the GPI transamidase complex. Involved in transfer of GPI to proteins. The polypeptide is GPI transamidase component PIG-S homolog (gpi17) (Schizosaccharomyces pombe (strain 972 / ATCC 24843) (Fission yeast)).